An 83-amino-acid polypeptide reads, in one-letter code: Non-muscle caldesmon (83 aa).

2 stretches are compositionally biased toward basic and acidic residues: residues Gln1–Lys44 and Asn62–Lys76. Residues Gln1–Gln63 are myosin and calmodulin-binding. Residues Gln1–Leu83 are disordered.

In non-muscle cells, phosphorylation by CDC2 during mitosis causes caldesmon to dissociate from microfilaments. Phosphorylation reduces caldesmon binding to actin, myosin, and calmodulin as well as its inhibition of actomyosin ATPase activity. Phosphorylation also occurs in both quiescent and dividing smooth muscle cells with similar effects on the interaction with actin and calmodulin and on microfilaments reorganization.

Its subcellular location is the cytoplasm. The protein resides in the cytoskeleton. It is found in the myofibril. It localises to the stress fiber. Functionally, actin- and myosin-binding protein implicated in the regulation of actomyosin interactions in smooth muscle and nonmuscle cells (could act as a bridge between myosin and actin filaments). Stimulates actin binding of tropomyosin which increases the stabilization of actin filament structure. In muscle tissues, inhibits the actomyosin ATPase by binding to F-actin. This inhibition is attenuated by calcium-calmodulin and is potentiated by tropomyosin. Interacts with actin, myosin, two molecules of tropomyosin and with calmodulin. Also plays an essential role during cellular mitosis and receptor capping. The chain is Non-muscle caldesmon (CALD1) from Bos taurus (Bovine).